A 140-amino-acid polypeptide reads, in one-letter code: MSANSFDGSIVSSYLTTRMPPWAGVRQNVMGSSIDGRPVLPANSTTLTYETVSGTPLETAASAAASAAAATARGIVTDFAFLSPLASSAASRSSARDDKLTALLAQLDSLTRELNVVSQQLLDLRQQVSALKASSPPNAV.

The stretch at 100–127 (LTALLAQLDSLTRELNVVSQQLLDLRQQ) forms a coiled coil. Residue serine 135 is modified to Phosphoserine; by host.

It belongs to the adenoviridae hexon-interlacing protein family. As to quaternary structure, homotrimer. Interacts with hexon protein; this interaction tethers the hexons together. Self-interacts with adjacent proteins. Interacts with kinesin light chain KLC1; this interaction leads to capsid disruption at the nuclear pore complex during virus entry into host cell.

It is found in the virion. The protein resides in the host nucleus. In terms of biological role, structural component of the virion that forms triskelion structures consisting of three molecules that stabilize three hexon trimers at the center of each icosahedral facet and fixes the peripentonal hexons. Dispensable for assembly. During virus entry, recruits the anterograde motor kinesin-1 to the capsid docked at the nuclear pore complex thereby subjecting the docked capsid to a pulling force. The resulting tension leads to capsid disruption, dispersion of capsid fragments toward cell periphery and eventually viral DNA entry into the host nucleus. The protein is Hexon-interlacing protein of Human adenovirus C serotype 2 (HAdV-2).